Consider the following 502-residue polypeptide: RNA polymerase sigma factor sigA (502 aa).

Residues Met1–Ser23 constitute a chloroplast transit peptide. Positions Tyr57–Ala71 are enriched in polar residues. The segment at Tyr57–Thr92 is disordered. Position 170 is a phosphothreonine (Thr170). The Polymerase core binding motif lies at Asp287–Ile300. Positions Trp461–Leu480 form a DNA-binding region, H-T-H motif.

It belongs to the sigma-70 factor family. Interacts with SIB1 in chloroplast. Binds to CSK. In terms of processing, the phosphorylation of Thr-170 mediated by oxidative conditions of plastoquinone (PQ) changes the promoter specificity, selectively inhibiting the transcription of the psaA gene, which encodes a PS-I protein. Phosphorylation of the holoenzyme occurs in the dark. This phosphorylation in response to plastoquinone redox state modification is mediated by CSK. In terms of tissue distribution, highly expressed in leaves, and to a lesser extent in roots. Expressed in old seedlings (8 days), cotyledons, hypocotyls, leaves, sepals and siliques.

The protein resides in the plastid. It localises to the chloroplast. Functionally, essential protein. Sigma factors are initiation factors that promote the attachment of plastid-encoded RNA polymerase (PEP) to specific initiation sites and are then released. Controls the transcription of the psaA gene and thus modulates photosystem stoichiometry. Thereby maintains a harmonious electron flow and photosynthetic efficiency. This chain is RNA polymerase sigma factor sigA (SIGA), found in Arabidopsis thaliana (Mouse-ear cress).